Here is a 338-residue protein sequence, read N- to C-terminus: N-acetyl-gamma-glutamyl-phosphate reductase (338 aa).

Cys148 is a catalytic residue.

Belongs to the NAGSA dehydrogenase family. Type 1 subfamily.

Its subcellular location is the cytoplasm. The enzyme catalyses N-acetyl-L-glutamate 5-semialdehyde + phosphate + NADP(+) = N-acetyl-L-glutamyl 5-phosphate + NADPH + H(+). Its pathway is amino-acid biosynthesis; L-arginine biosynthesis; N(2)-acetyl-L-ornithine from L-glutamate: step 3/4. Catalyzes the NADPH-dependent reduction of N-acetyl-5-glutamyl phosphate to yield N-acetyl-L-glutamate 5-semialdehyde. The protein is N-acetyl-gamma-glutamyl-phosphate reductase of Leptospira interrogans serogroup Icterohaemorrhagiae serovar Lai (strain 56601).